A 360-amino-acid chain; its full sequence is Uptake hydrogenase small subunit (360 aa).

A signal peptide (tat-type signal) is located at residues 1 to 43 (MVETFYEVMRRQGISRRSFLKYCSLTATSLGLGPSFLPQIAHA). Positions 60, 63, 158, 192, 230, 233, 258, and 264 each coordinate [4Fe-4S] cluster. Residues Cys273, Cys292, and Cys295 each coordinate [3Fe-4S] cluster.

Belongs to the [NiFe]/[NiFeSe] hydrogenase small subunit family. In terms of assembly, heterodimer of a large and a small subunit. [4Fe-4S] cluster is required as a cofactor. The cofactor is [3Fe-4S] cluster. In terms of processing, predicted to be exported by the Tat system. The position of the signal peptide cleavage has been experimentally proven.

Its subcellular location is the cell membrane. The catalysed reaction is H2 + A = AH2. In terms of biological role, this enzyme recycles the H(2) produced by nitrogenase to increase the production of ATP and to protect nitrogenase against inhibition or damage by O(2) under carbon- or phosphate-limited conditions. In Cupriavidus necator (strain ATCC 17699 / DSM 428 / KCTC 22496 / NCIMB 10442 / H16 / Stanier 337) (Ralstonia eutropha), this protein is Uptake hydrogenase small subunit (hoxK).